The chain runs to 530 residues: GATA zinc finger domain-containing protein 4 (530 aa).

Disordered stretches follow at residues 1–27 (MSIN…FWDN) and 212–386 (STVV…INNN). Low complexity-rich tracts occupy residues 7-17 (NNNKNNNNKNN), 216-290 (SNSP…FNNN), and 299-386 (NSNN…INNN). The segment at 494–518 (CSMCNIKESISWIKTMVNGQLCNAC) adopts a GATA-type zinc-finger fold.

The chain is GATA zinc finger domain-containing protein 4 (gtaD) from Dictyostelium discoideum (Social amoeba).